Here is a 264-residue protein sequence, read N- to C-terminus: tRNA (guanine-N(1)-)-methyltransferase (264 aa).

S-adenosyl-L-methionine is bound by residues G125 and 145 to 150 (LGDFVL).

Belongs to the RNA methyltransferase TrmD family. As to quaternary structure, homodimer.

It localises to the cytoplasm. The enzyme catalyses guanosine(37) in tRNA + S-adenosyl-L-methionine = N(1)-methylguanosine(37) in tRNA + S-adenosyl-L-homocysteine + H(+). Functionally, specifically methylates guanosine-37 in various tRNAs. The sequence is that of tRNA (guanine-N(1)-)-methyltransferase from Burkholderia cenocepacia (strain ATCC BAA-245 / DSM 16553 / LMG 16656 / NCTC 13227 / J2315 / CF5610) (Burkholderia cepacia (strain J2315)).